The sequence spans 184 residues: Large ribosomal subunit protein uL6 (184 aa).

Belongs to the universal ribosomal protein uL6 family. In terms of assembly, part of the 50S ribosomal subunit.

Functionally, this protein binds to the 23S rRNA, and is important in its secondary structure. It is located near the subunit interface in the base of the L7/L12 stalk, and near the tRNA binding site of the peptidyltransferase center. This Thermococcus gammatolerans (strain DSM 15229 / JCM 11827 / EJ3) protein is Large ribosomal subunit protein uL6.